Reading from the N-terminus, the 492-residue chain is Putative transporter SVOPL (492 aa).

10 helical membrane-spanning segments follow: residues 48–68 (IALF…IMLI), 86–106 (VALV…LFGL), 121–141 (FLWG…IWFV), 179–199 (VFWL…IPTI), 203–223 (WLIR…KFIP), 281–301 (TLQI…VILA), 348–368 (IIST…INFL), 383–403 (LFFL…FLFM), 429–449 (ALGM…APFI), and 458–478 (ILGA…SAFT).

The protein belongs to the major facilitator superfamily.

It is found in the membrane. The chain is Putative transporter SVOPL (SVOPL) from Homo sapiens (Human).